Reading from the N-terminus, the 256-residue chain is GTP cyclohydrolase FolE2 (256 aa).

It belongs to the GTP cyclohydrolase IV family.

The catalysed reaction is GTP + H2O = 7,8-dihydroneopterin 3'-triphosphate + formate + H(+). Its pathway is cofactor biosynthesis; 7,8-dihydroneopterin triphosphate biosynthesis; 7,8-dihydroneopterin triphosphate from GTP: step 1/1. Converts GTP to 7,8-dihydroneopterin triphosphate. The chain is GTP cyclohydrolase FolE2 from Maridesulfovibrio salexigens (strain ATCC 14822 / DSM 2638 / NCIMB 8403 / VKM B-1763) (Desulfovibrio salexigens).